A 306-amino-acid chain; its full sequence is Acetyl-coenzyme A carboxylase carboxyl transferase subunit beta (306 aa).

A CoA carboxyltransferase N-terminal domain is found at 25–294 (LWIKDPTSGE…AVNPSNPSPT (270 aa)). Positions 286-306 (VNPSNPSPTDSQPPLSKAEAA) are disordered. Residues 287–299 (NPSNPSPTDSQPP) are compositionally biased toward polar residues.

Belongs to the AccD/PCCB family. Acetyl-CoA carboxylase is a heterohexamer composed of biotin carboxyl carrier protein (AccB), biotin carboxylase (AccC) and two subunits each of ACCase subunit alpha (AccA) and ACCase subunit beta (AccD).

It localises to the cytoplasm. The enzyme catalyses N(6)-carboxybiotinyl-L-lysyl-[protein] + acetyl-CoA = N(6)-biotinyl-L-lysyl-[protein] + malonyl-CoA. The protein operates within lipid metabolism; malonyl-CoA biosynthesis; malonyl-CoA from acetyl-CoA: step 1/1. Functionally, component of the acetyl coenzyme A carboxylase (ACC) complex. Biotin carboxylase (BC) catalyzes the carboxylation of biotin on its carrier protein (BCCP) and then the CO(2) group is transferred by the transcarboxylase to acetyl-CoA to form malonyl-CoA. The protein is Acetyl-coenzyme A carboxylase carboxyl transferase subunit beta of Bartonella quintana (strain Toulouse) (Rochalimaea quintana).